The primary structure comprises 1503 residues: EF-hand calcium-binding domain-containing protein 5 (1503 aa).

The disordered stretch occupies residues 1–23 (MNESASQEELRPAQENRKEDKER). Basic and acidic residues predominate over residues 8 to 23 (EELRPAQENRKEDKER). Ser-77 bears the Phosphoserine mark. Disordered stretches follow at residues 477-518 (ASKT…EQGP), 544-656 (IEPG…QGPY), and 730-750 (FPET…KSQK). Residues 549–561 (HTESTLEQGSSRR) show a composition bias toward polar residues. Basic and acidic residues-rich tracts occupy residues 562–582 (LLTE…HKGS) and 607–622 (GSRR…HKGS). Positions 869-904 (RQRLLLEAIFQKWDSDGSGFLDLKEVDELLYTYKEG) constitute an EF-hand domain. Residues Asp-882, Asp-884, Ser-886, and Glu-893 each contribute to the Ca(2+) site.

The chain is EF-hand calcium-binding domain-containing protein 5 (EFCAB5) from Homo sapiens (Human).